A 268-amino-acid polypeptide reads, in one-letter code: Octanoyltransferase (268 aa).

The 189-residue stretch at 73 to 261 (GEADELVWLL…AFEEVFGPAV (189 aa)) folds into the BPL/LPL catalytic domain. Substrate-binding positions include 112-119 (RGGEYTYH), 192-194 (ALG), and 205-207 (GLS). Cysteine 223 acts as the Acyl-thioester intermediate in catalysis.

The protein belongs to the LipB family.

It localises to the cytoplasm. The enzyme catalyses octanoyl-[ACP] + L-lysyl-[protein] = N(6)-octanoyl-L-lysyl-[protein] + holo-[ACP] + H(+). It functions in the pathway protein modification; protein lipoylation via endogenous pathway; protein N(6)-(lipoyl)lysine from octanoyl-[acyl-carrier-protein]: step 1/2. Its function is as follows. Catalyzes the transfer of endogenously produced octanoic acid from octanoyl-acyl-carrier-protein onto the lipoyl domains of lipoate-dependent enzymes. Lipoyl-ACP can also act as a substrate although octanoyl-ACP is likely to be the physiological substrate. This chain is Octanoyltransferase, found in Agrobacterium fabrum (strain C58 / ATCC 33970) (Agrobacterium tumefaciens (strain C58)).